The following is a 346-amino-acid chain: tRNA N6-adenosine threonylcarbamoyltransferase (346 aa).

Positions 109, 113, and 135 each coordinate Fe cation. Residues 135–139 (YVSGG), D167, G180, E184, and N263 contribute to the substrate site. D291 serves as a coordination point for Fe cation.

The protein belongs to the KAE1 / TsaD family. As to quaternary structure, monomer. Component of the KEOPS complex that consists of Kae1, Bud32, Cgi121 and Pcc1; the whole complex dimerizes. Fe(2+) is required as a cofactor.

Its subcellular location is the cytoplasm. The catalysed reaction is L-threonylcarbamoyladenylate + adenosine(37) in tRNA = N(6)-L-threonylcarbamoyladenosine(37) in tRNA + AMP + H(+). Its function is as follows. Required for the formation of a threonylcarbamoyl group on adenosine at position 37 (t(6)A37) in tRNAs that read codons beginning with adenine. Is a component of the KEOPS complex that is probably involved in the transfer of the threonylcarbamoyl moiety of threonylcarbamoyl-AMP (TC-AMP) to the N6 group of A37. Kae1 likely plays a direct catalytic role in this reaction, but requires other protein(s) of the complex to fulfill this activity. This chain is tRNA N6-adenosine threonylcarbamoyltransferase, found in Methanopyrus kandleri (strain AV19 / DSM 6324 / JCM 9639 / NBRC 100938).